Reading from the N-terminus, the 144-residue chain is 3-dehydroquinate dehydratase (144 aa).

Residue tyrosine 23 is the Proton acceptor of the active site. The substrate site is built by asparagine 74, histidine 80, and aspartate 87. The active-site Proton donor is the histidine 100. Substrate-binding positions include 101 to 102 (LS) and arginine 111.

The protein belongs to the type-II 3-dehydroquinase family. Homododecamer.

It catalyses the reaction 3-dehydroquinate = 3-dehydroshikimate + H2O. It participates in metabolic intermediate biosynthesis; chorismate biosynthesis; chorismate from D-erythrose 4-phosphate and phosphoenolpyruvate: step 3/7. In terms of biological role, catalyzes a trans-dehydration via an enolate intermediate. The chain is 3-dehydroquinate dehydratase from Haemophilus ducreyi (strain 35000HP / ATCC 700724).